Here is a 198-residue protein sequence, read N- to C-terminus: V-type proton ATPase subunit E (198 aa).

Belongs to the V-ATPase E subunit family.

Its function is as follows. Produces ATP from ADP in the presence of a proton gradient across the membrane. This chain is V-type proton ATPase subunit E, found in Borrelia hermsii (strain HS1 / DAH).